Consider the following 396-residue polypeptide: L-lactate dehydrogenase (396 aa).

The FMN hydroxy acid dehydrogenase domain occupies 1–380; it reads MIISAASDYR…TQDSLVQVLG (380 aa). Residue Tyr-24 coordinates substrate. FMN-binding residues include Ser-106 and Gln-127. Position 129 (Tyr-129) interacts with substrate. Residue Thr-155 coordinates FMN. Arg-164 is a binding site for substrate. Lys-251 serves as a coordination point for FMN. The active-site Proton acceptor is the His-275. Arg-278 is a binding site for substrate. 306-330 is a binding site for FMN; the sequence is DSGIRNGLDVVRMIALGADTVLLGR.

This sequence belongs to the FMN-dependent alpha-hydroxy acid dehydrogenase family. Requires FMN as cofactor.

The protein resides in the cell inner membrane. The catalysed reaction is (S)-lactate + A = pyruvate + AH2. Functionally, catalyzes the conversion of L-lactate to pyruvate. Is coupled to the respiratory chain. The protein is L-lactate dehydrogenase of Escherichia coli O1:K1 / APEC.